Here is a 1219-residue protein sequence, read N- to C-terminus: Myosin-5 (1219 aa).

Residues 1–12 (MAILKRGARKKV) show a composition bias toward basic residues. The disordered stretch occupies residues 1–20 (MAILKRGARKKVHQEPAKRS). The 680-residue stretch at 36 to 715 (VGVSDLTLLS…TLFALEHMRD (680 aa)) folds into the Myosin motor domain. 129 to 136 (GESGAGKT) lines the ATP pocket. Ser-357 is subject to Phosphoserine. Phosphotyrosine is present on Tyr-359. Residues 404-486 (SIGILDIYGF…PGIFAAMNDS (83 aa)) form an actin-binding region. 2 consecutive IQ domains span residues 719-739 (HNMA…RIDA) and 740-765 (ATKI…YGTK). Residues 771–961 (KERRSMSLLG…TISVRRGNPP (191 aa)) form the TH1 domain. Ser-777 is subject to Phosphoserine. A compositionally biased stretch (polar residues) spans 951 to 964 (STISVRRGNPPNSQ). Disordered regions lie at residues 951–1106 (STIS…SELP) and 1139–1167 (TAYM…VLNS). Residues 974–984 (SISSGYHASSS) are compositionally biased toward low complexity. Ser-992 is subject to Phosphoserine. Over residues 1030–1041 (NPASTLTASQSN) the composition is skewed to polar residues. Positions 1048–1063 (TAATRATPAATPAAAA) are enriched in low complexity. Positions 1072–1083 (IPPPPPPPPPSS) are enriched in pro residues. The SH3 domain maps to 1085 to 1147 (PKEPMFEAAY…PTAYMKPHSG (63 aa)). At Ser-1205 the chain carries Phosphoserine.

This sequence belongs to the TRAFAC class myosin-kinesin ATPase superfamily. Myosin family. As to quaternary structure, interacts (via myosin motor domain) with SHE4; this interaction is important for proper localization and may regulate the interaction of the motor domain with actin. Interacts (via SH3 domain) with VRP1; this interaction is required for localization to sites of polarized growth and may regulate the interaction of the tail domain with actin. Interacts (via SH3 domain) with PAN1; this interaction is important for late stages of endocytopsis. Interacts (via SH3 domain) with BBC1 and LAS17. Interacts (via C-terminal acidic tail) with ARC19 and ARC40; ARC19 and ARC40 are Arp2/3 complex subunits. Interacts with BZZ1, PKH1, PKH2, YPK1 and YPK2. Post-translationally, phosphorylation of the TEDS site (Ser-357) is required for the polarization of the actin cytoskeleton and for ligand-induced, but not for constitutive internalization of STE2. Phosphorylation probably activates the myosin-I ATPase activity. Ser-357 is phosphorylated by YPK2 in vitro.

Its subcellular location is the cytoplasm. It localises to the cytoskeleton. It is found in the actin patch. Its function is as follows. One of two redundant type-I myosins implicated in the organization of the actin cytoskeleton. Required for proper actin cytoskeleton polarization and for the internalization step in endocytosis. At the cell cortex, assembles in patch-like structures together with proteins from the actin-polymerizing machinery and promotes actin assembly. Functions redundantly with LAS17 as actin nucleation-promoting factor (NPF) for the Arp2/3 complex. Motor domain phosphorylation by PAK kinases CLA4 and STE20 promotes CDC42-regulated actin assembly. Functions together with the NPF PAN1 in late stages of endocytosis. Motor domain phosphorylation by PDK1 kinases PKH1 and PKH2, and by SGK kinases YPK1 and YPK2, promotes ligand-induced, but not constitutive endocytosis of the G protein-coupled receptor STE2. This Saccharomyces cerevisiae (strain YJM789) (Baker's yeast) protein is Myosin-5 (MYO5).